The sequence spans 189 residues: Tetratricopeptide repeat protein 36 (189 aa).

3 TPR repeats span residues 51–84, 86–118, and 123–156; these read SKALELQGVMAAEAGDLSTALERFGQAICLLPER, SAYNNRAQARRLQGDVAGALEDLERAVELSGGR, and RQSFVQRGLLARLQGRDDDARRDFERAARLGSPF.

It belongs to the TTC36 family.

This is Tetratricopeptide repeat protein 36 (TTC36) from Homo sapiens (Human).